Reading from the N-terminus, the 619-residue chain is Isocitrate dehydrogenase kinase/phosphatase (619 aa).

Residues 354-360 (APGIRGM) and K375 contribute to the ATP site. D409 is an active-site residue.

It belongs to the AceK family.

It is found in the cytoplasm. It catalyses the reaction L-seryl-[isocitrate dehydrogenase] + ATP = O-phospho-L-seryl-[isocitrate dehydrogenase] + ADP + H(+). In terms of biological role, bifunctional enzyme which can phosphorylate or dephosphorylate isocitrate dehydrogenase (IDH) on a specific serine residue. This is a regulatory mechanism which enables bacteria to bypass the Krebs cycle via the glyoxylate shunt in response to the source of carbon. When bacteria are grown on glucose, IDH is fully active and unphosphorylated, but when grown on acetate or ethanol, the activity of IDH declines drastically concomitant with its phosphorylation. The chain is Isocitrate dehydrogenase kinase/phosphatase from Bordetella bronchiseptica (strain ATCC BAA-588 / NCTC 13252 / RB50) (Alcaligenes bronchisepticus).